We begin with the raw amino-acid sequence, 837 residues long: MLGVLKKVFDPNKRQLARLEKIADQVDALGPEMARLSDEQLRQKTEEFKARYQQGESLDDLLVEAFAVVREGAKRVLGLYPYKVQIMGGVVLHEGDIAEMKTGEGKTLTATMPVYLNALTGRGVHVVTVNEYLASRDAKEMGQLYEFLGLTVGLNLSGMSREEKQAAYNADITYGTNNEFGFDYLRDNMVLYKEHIVQRPLYFAVVDEVDSILIDEARTPLIISGTAQKSTKLYVQANAFVRTLRKDVDYTYDEKSKSVQLTEEGMNKAERAFGIDNLFDLKHVTLNHHIQLALRAHVTMQRDVDYVVQDGKVIIVDPFTGRLMHGRRYSDGLHQAIEAKEGLEIQNESMTLATITFQNYFRMYEKLAGMTGTAKTEEEEFRNIYNMRVVVIPTNRPVIREDRPDLIYRTMEGKFRAVVEDIAQRHAKGQPVLVGTVAIETSELLSEMLKKRGIPHNVLNAKNHAKEAEIIAQAGQKGAVTIATNMAGRGTDIKLGEGVKELGGLAVIGTERHESRRIDNQLRGRSGRQGDPGVSQFYLSLEDELMRRFGSESLMAMMDRLGMDDSQPIQSKMVTRAVESAQKRVEGNNFDARKQLLQYDDVLREQREVIYRQRFEVLDADNLRGIIEKMIRSVIERVVNTYTPKEDLPEEWNLKGVVDYLNAYLLPEGDVTEGDLRGKEPEEMIELIWAKVKARYDEKETQIPPEQMREFERVVVLRAVDMKWMNHIDAMEQLRQGIHLRAYGQVDPLREYQMEGYAMFENMIAAIEEEVATYIMKAEIHHNLERQEVAKGEAVHPKEDGEEPKKKPIRKAVRVGRNDPCPCGSGKKYKHCCGRAV.

Residues Gln85, 103–107 (GEGKT), and Asp492 contribute to the ATP site. Basic and acidic residues predominate over residues 787-806 (QEVAKGEAVHPKEDGEEPKK). Positions 787-813 (QEVAKGEAVHPKEDGEEPKKKPIRKAV) are disordered. Zn(2+) contacts are provided by Cys821, Cys823, Cys832, and Cys833.

The protein belongs to the SecA family. Monomer and homodimer. Part of the essential Sec protein translocation apparatus which comprises SecA, SecYEG and auxiliary proteins SecDF. Other proteins may also be involved. Zn(2+) serves as cofactor.

The protein resides in the cell membrane. Its subcellular location is the cytoplasm. It carries out the reaction ATP + H2O + cellular proteinSide 1 = ADP + phosphate + cellular proteinSide 2.. Functionally, part of the Sec protein translocase complex. Interacts with the SecYEG preprotein conducting channel. Has a central role in coupling the hydrolysis of ATP to the transfer of proteins into and across the cell membrane, serving as an ATP-driven molecular motor driving the stepwise translocation of polypeptide chains across the membrane. This is Protein translocase subunit SecA 1 from Geobacillus thermodenitrificans (strain NG80-2).